The following is a 415-amino-acid chain: DNA polymerase IV (415 aa).

The region spanning Ile15–Gly196 is the UmuC domain. The Mg(2+) site is built by Asp19 and Asp115. Glu116 is a catalytic residue. The span at Lys235–Asp246 shows a compositional bias: basic and acidic residues. The tract at residues Lys235 to Met260 is disordered. Over residues Gln249–Met260 the composition is skewed to polar residues.

The protein belongs to the DNA polymerase type-Y family. Monomer. Mg(2+) is required as a cofactor.

The protein localises to the cytoplasm. The enzyme catalyses DNA(n) + a 2'-deoxyribonucleoside 5'-triphosphate = DNA(n+1) + diphosphate. Poorly processive, error-prone DNA polymerase involved in untargeted mutagenesis. Copies undamaged DNA at stalled replication forks, which arise in vivo from mismatched or misaligned primer ends. These misaligned primers can be extended by PolIV. Exhibits no 3'-5' exonuclease (proofreading) activity. May be involved in translesional synthesis, in conjunction with the beta clamp from PolIII. This is DNA polymerase IV from Bacillus cereus (strain ATCC 14579 / DSM 31 / CCUG 7414 / JCM 2152 / NBRC 15305 / NCIMB 9373 / NCTC 2599 / NRRL B-3711).